The following is a 345-amino-acid chain: Protein RecA (345 aa).

80–87 provides a ligand contact to ATP; that stretch reads GPESSGKT.

It belongs to the RecA family.

The protein localises to the cytoplasm. Its function is as follows. Can catalyze the hydrolysis of ATP in the presence of single-stranded DNA, the ATP-dependent uptake of single-stranded DNA by duplex DNA, and the ATP-dependent hybridization of homologous single-stranded DNAs. It interacts with LexA causing its activation and leading to its autocatalytic cleavage. The sequence is that of Protein RecA from Mycoplasma mycoides subsp. mycoides SC (strain CCUG 32753 / NCTC 10114 / PG1).